The following is a 394-amino-acid chain: Elongation factor Tu (394 aa).

A tr-type G domain is found at 10–204; the sequence is KPHVNVGTIG…AMDDYIPAPE (195 aa). The segment at 19–26 is G1; sequence GHVDHGKT. 19 to 26 contributes to the GTP binding site; it reads GHVDHGKT. T26 lines the Mg(2+) pocket. The G2 stretch occupies residues 60-64; it reads GITIN. A G3 region spans residues 81–84; it reads DCPG. GTP contacts are provided by residues 81-85 and 136-139; these read DCPGH and NKCD. Positions 136–139 are G4; it reads NKCD. Residues 174 to 176 form a G5 region; sequence SAL.

The protein belongs to the TRAFAC class translation factor GTPase superfamily. Classic translation factor GTPase family. EF-Tu/EF-1A subfamily. As to quaternary structure, monomer.

The protein resides in the cytoplasm. The enzyme catalyses GTP + H2O = GDP + phosphate + H(+). Its function is as follows. GTP hydrolase that promotes the GTP-dependent binding of aminoacyl-tRNA to the A-site of ribosomes during protein biosynthesis. The polypeptide is Elongation factor Tu (Francisella tularensis subsp. tularensis (strain FSC 198)).